The sequence spans 361 residues: Queuine tRNA-ribosyltransferase (361 aa).

Asp-92 serves as the catalytic Proton acceptor. Substrate-binding positions include 92–96 (DSGGF), Asp-146, Gln-189, and Gly-216. Positions 247-253 (GVGKPVD) are RNA binding. Catalysis depends on Asp-266, which acts as the Nucleophile. Positions 271-275 (TRSGR) are RNA binding; important for wobble base 34 recognition. Zn(2+)-binding residues include Cys-304, Cys-306, Cys-309, and His-335.

The protein belongs to the queuine tRNA-ribosyltransferase family. In terms of assembly, homodimer. Within each dimer, one monomer is responsible for RNA recognition and catalysis, while the other monomer binds to the replacement base PreQ1. The cofactor is Zn(2+).

It catalyses the reaction 7-aminomethyl-7-carbaguanine + guanosine(34) in tRNA = 7-aminomethyl-7-carbaguanosine(34) in tRNA + guanine. Its pathway is tRNA modification; tRNA-queuosine biosynthesis. Its function is as follows. Catalyzes the base-exchange of a guanine (G) residue with the queuine precursor 7-aminomethyl-7-deazaguanine (PreQ1) at position 34 (anticodon wobble position) in tRNAs with GU(N) anticodons (tRNA-Asp, -Asn, -His and -Tyr). Catalysis occurs through a double-displacement mechanism. The nucleophile active site attacks the C1' of nucleotide 34 to detach the guanine base from the RNA, forming a covalent enzyme-RNA intermediate. The proton acceptor active site deprotonates the incoming PreQ1, allowing a nucleophilic attack on the C1' of the ribose to form the product. After dissociation, two additional enzymatic reactions on the tRNA convert PreQ1 to queuine (Q), resulting in the hypermodified nucleoside queuosine (7-(((4,5-cis-dihydroxy-2-cyclopenten-1-yl)amino)methyl)-7-deazaguanosine). The chain is Queuine tRNA-ribosyltransferase from Rickettsia africae (strain ESF-5).